Reading from the N-terminus, the 217-residue chain is MKFFVDSANIEEIRELQNLSLVDGVTTNPSLILKSGRNILDVIKEICTLIEGPVSAEVAATEFEIIMKEAAILAKIADNICIKLPLTLEGLKACKALAAQGLKTNLTLCFSANQALLAAKAGATFVSPFIGRLDDCGINGSELLHEIRTIYDNYGFETQILAASIRTVNHVKEAALSGADVASVPPTILKALVKHPLTDKGLQTFLDDWKKTGQNIA.

K83 (schiff-base intermediate with substrate) is an active-site residue.

The protein belongs to the transaldolase family. Type 3B subfamily.

The protein localises to the cytoplasm. The enzyme catalyses D-sedoheptulose 7-phosphate + D-glyceraldehyde 3-phosphate = D-erythrose 4-phosphate + beta-D-fructose 6-phosphate. It participates in carbohydrate degradation; pentose phosphate pathway; D-glyceraldehyde 3-phosphate and beta-D-fructose 6-phosphate from D-ribose 5-phosphate and D-xylulose 5-phosphate (non-oxidative stage): step 2/3. In terms of biological role, transaldolase is important for the balance of metabolites in the pentose-phosphate pathway. This chain is Probable transaldolase, found in Bartonella quintana (strain Toulouse) (Rochalimaea quintana).